Consider the following 444-residue polypeptide: Presenilin sel-12 (444 aa).

The Cytoplasmic segment spans residues 1–45 (MPSTRRQQEGGGADAETHTVYGTNLITNRNSQEDENVVEEAELKY). A helical membrane pass occupies residues 46–66 (GASHVIHLFVPVSLCMALVVF). The Lumenal segment spans residues 67-101 (TMNTITFYSQNNGRHLLYTPFVRETDSIVEKGLMS). Residues 102 to 122 (LGNALVMLCVVVLMTVLLIVF) form a helical membrane-spanning segment. Residues 123 to 130 (YKYKFYKL) lie on the Cytoplasmic side of the membrane. The chain crosses the membrane as a helical span at residues 131 to 151 (IHGWLIVSSFLLLFLFTTIYV). Topologically, residues 152-163 (QEVLKSFDVSPS) are lumenal. A helical membrane pass occupies residues 164-184 (ALLVLFGLGNYGVLGMMCIHW). The Cytoplasmic portion of the chain corresponds to 185 to 189 (KGPLR). The helical transmembrane segment at 190 to 210 (LQQFYLITMSALMALVFIKYL) threads the bilayer. Over 211 to 212 (PE) the chain is Lumenal. The chain crosses the membrane as a helical span at residues 213–233 (WTVWFVLFVISVWDLVAVLTP). Asp226 is an active-site residue. At 234–359 (KGPLRYLVET…RHEEEERGVK (126 aa)) the chain is on the cytoplasmic side. Positions 275–331 (TDPREPTSSDSNTSTAFPGEASCSSETPKRPKVKRIPQKVQIESNTTASTTQNSGVR) are disordered. 2 stretches are compositionally biased toward polar residues: residues 282–300 (SSDS…CSSE) and 315–329 (QIES…QNSG). Residues 360-380 (LGLGDFIFYSVLLGKASSYFD) traverse the membrane as a helical segment. Residue Asp364 is part of the active site. Residues 381–384 (WNTT) are Lumenal-facing. The chain crosses the membrane as a helical span at residues 385 to 405 (IACYVAILIGLCFTLVLLAVF). Residues 406-413 (KRALPALP) are Cytoplasmic-facing. The PAL signature appears at 410-412 (PAL). Positions 414 to 434 (ISIFSGLIFYFCTRWIITPFV) form an intramembrane region, helical. Residues 435–444 (TQVSQKCLLY) lie on the Cytoplasmic side of the membrane.

Belongs to the peptidase A22A family. Homodimer. Component of the gamma-secretase complex, a complex probably composed of the presenilin homodimer (sel-12, hop-1 or spe-4), nicastrin (aph-2), aph-1 and pen-2. Interacts with sel-10. As to expression, expressed in most neurons.

It localises to the endoplasmic reticulum membrane. Its subcellular location is the golgi apparatus membrane. Its function is as follows. Probable catalytic subunit of the gamma-secretase complex, an endoprotease complex that catalyzes the intramembrane cleavage of integral membrane proteins such as Notch receptors (lin-12 or glp-1). Provides the major presenilin function compared to hop-1 and spe-4. Required cell-autonomously for correct neurite connectivity of the AIY cholinergic interneurons and their correct functioning in thermotaxis. Required for mesodermal patterning of muscle function. Promotes basement membrane gap formation during tissue remodeling. The sequence is that of Presenilin sel-12 from Caenorhabditis elegans.